A 446-amino-acid chain; its full sequence is Thymidine phosphorylase (446 aa).

Belongs to the thymidine/pyrimidine-nucleoside phosphorylase family. Homodimer.

The enzyme catalyses thymidine + phosphate = 2-deoxy-alpha-D-ribose 1-phosphate + thymine. Its pathway is pyrimidine metabolism; dTMP biosynthesis via salvage pathway; dTMP from thymine: step 1/2. Its function is as follows. The enzymes which catalyze the reversible phosphorolysis of pyrimidine nucleosides are involved in the degradation of these compounds and in their utilization as carbon and energy sources, or in the rescue of pyrimidine bases for nucleotide synthesis. This chain is Thymidine phosphorylase, found in Idiomarina loihiensis (strain ATCC BAA-735 / DSM 15497 / L2-TR).